A 296-amino-acid polypeptide reads, in one-letter code: uncharacterized protein (296 aa).

Residues 1 to 20 (MRKFIFVLLTLLLVSPFSFA) form the signal peptide.

This is an uncharacterized protein from Escherichia coli (strain K12).